A 249-amino-acid polypeptide reads, in one-letter code: Sec-independent protein translocase protein TatC (249 aa).

Helical transmembrane passes span 18-38 (VSVG…KNIF), 69-89 (AIVI…APGL), 96-116 (VILP…AFSY), 151-171 (LILG…LAKV), 187-207 (IVVI…SQIF), and 208-228 (MALP…MVNP).

The protein belongs to the TatC family. As to quaternary structure, the Tat system comprises two distinct complexes: a TatABC complex, containing multiple copies of TatA, TatB and TatC subunits, and a separate TatA complex, containing only TatA subunits. Substrates initially bind to the TatABC complex, which probably triggers association of the separate TatA complex to form the active translocon.

It is found in the cell inner membrane. Its function is as follows. Part of the twin-arginine translocation (Tat) system that transports large folded proteins containing a characteristic twin-arginine motif in their signal peptide across membranes. Together with TatB, TatC is part of a receptor directly interacting with Tat signal peptides. This chain is Sec-independent protein translocase protein TatC, found in Helicobacter pylori (strain J99 / ATCC 700824) (Campylobacter pylori J99).